The chain runs to 547 residues: MAAKDVVFGDSARTKMVEGVNILANAVKTTLGPKGRNVVIERSFGGPIITKDGVSVAKEIELKDKLQNMGAQMVKEVASKTADIAGDGTTTATVLAQSIVREGMKYVVSGYNPLDLKRGIDKAVTAAIEELAKISKPCTTTKEIAQVGSISANSDQSIGQRIAEAMEKVGKEGVITVEDGKSLEDELEVVEGMQFDRGYLSPYFINQPEKQVAVLESPYVLLFDKKIANIRDLLPVLEQVAKSGRPLLIIAEDVEGEALATLVVNNIRGIIKTCAVKAPGFGDRRKAMLEDIAILTGGIVIAEEIGLTLEKTTLEHLGQAKRLEVGKENTIIIDGAGDAKAIEARVKNIRVQVEEATSDYDKEKLQERVAKLAGGVAVIRVGAATEVEMKEKKARVDDALHATRAAVEEGIIPGGGVALIRAMQGIKGLKGDNADQDAGISIVLRAMQEPLRTIVSNAGEDAGVVVNAVQASKGNNGYNAATGEYGDLVAQGVIDPTKVTKAALVNAASVAGLLLTTDCAISEAPKDESAGGGMPDMGGMGGMGGMM.

ATP-binding positions include 30–33, Lys-51, 87–91, Gly-415, 479–481, and Asp-495; these read TLGP, DGTTT, and NAA.

This sequence belongs to the chaperonin (HSP60) family. Forms a cylinder of 14 subunits composed of two heptameric rings stacked back-to-back. Interacts with the co-chaperonin GroES.

It is found in the cytoplasm. It catalyses the reaction ATP + H2O + a folded polypeptide = ADP + phosphate + an unfolded polypeptide.. Together with its co-chaperonin GroES, plays an essential role in assisting protein folding. The GroEL-GroES system forms a nano-cage that allows encapsulation of the non-native substrate proteins and provides a physical environment optimized to promote and accelerate protein folding. This Polynucleobacter necessarius subsp. necessarius (strain STIR1) protein is Chaperonin GroEL.